Here is a 207-residue protein sequence, read N- to C-terminus: Small ribosomal subunit protein uS4A (207 aa).

The 61-residue stretch at 98–158 (TRLDNVAYRL…EKSKSSAKFK (61 aa)) folds into the S4 RNA-binding domain.

This sequence belongs to the universal ribosomal protein uS4 family. As to quaternary structure, part of the 30S ribosomal subunit. Contacts protein S5. The interaction surface between S4 and S5 is involved in control of translational fidelity.

Its function is as follows. One of the primary rRNA binding proteins, it binds directly to 16S rRNA where it nucleates assembly of the body of the 30S subunit. With S5 and S12 plays an important role in translational accuracy. This Alkaliphilus oremlandii (strain OhILAs) (Clostridium oremlandii (strain OhILAs)) protein is Small ribosomal subunit protein uS4A.